The chain runs to 472 residues: MELQDPKMNGALPSDAVGYRQEREGFLPSRGPAPGSKPVQFMDFEGKTSFGMSVFNLSNAIMGSGILGLAYAMAHTGVIFFLALLLCIALLSSYSIHLLLTCAGIAGIRAYEQLGQRAFGPAGKVVVATVICLHNVGAMSSYLFIIKSELPLVIGTFLYMDPEGDWFLKGNLLIIIVSVLIILPLALMKHLGYLGYTSGLSLTCMLFFLVSVIYKKFQLGCAIGHNETAMESEALVGLPSQGLNSSCEAQMFTVDSQMSYTVPIMAFAFVCHPEVLPIYTELCRPSKRRMQAVANVSIGAMFCMYGLTATFGYLTFYSSVKAEMLHMYSQKDPLILCVRLAVLLAVTLTVPVVLFPIRRALQQLLFPGKAFSWPRHVAIALILLVLVNVLVICVPTIRDIFGVIGSTSAPSLIFILPSIFYLRIVPSEVEPFLSWPKIQALCFGVLGVLFMAVSLGFMFANWATGQSRMSGH.

M1 bears the N-acetylmethionine mark. Residues 1 to 48 (MELQDPKMNGALPSDAVGYRQEREGFLPSRGPAPGSKPVQFMDFEGKT) are Cytoplasmic-facing. A helical transmembrane segment spans residues 49-71 (SFGMSVFNLSNAIMGSGILGLAY). At 72–87 (AMAHTGVIFFLALLLC) the chain is on the extracellular side. A helical transmembrane segment spans residues 88-108 (IALLSSYSIHLLLTCAGIAGI). The Cytoplasmic segment spans residues 109–125 (RAYEQLGQRAFGPAGKV). Residues 126–146 (VVATVICLHNVGAMSSYLFII) form a helical membrane-spanning segment. Residues 147 to 166 (KSELPLVIGTFLYMDPEGDW) lie on the Extracellular side of the membrane. Residues 167–187 (FLKGNLLIIIVSVLIILPLAL) form a helical membrane-spanning segment. The Cytoplasmic portion of the chain corresponds to 188–192 (MKHLG). Residues 193–213 (YLGYTSGLSLTCMLFFLVSVI) traverse the membrane as a helical segment. Topologically, residues 214-257 (YKKFQLGCAIGHNETAMESEALVGLPSQGLNSSCEAQMFTVDSQ) are extracellular. The cysteines at positions 221 and 247 are disulfide-linked. The N-linked (GlcNAc...) asparagine glycan is linked to N226. The helical transmembrane segment at 258-278 (MSYTVPIMAFAFVCHPEVLPI) threads the bilayer. At 279–295 (YTELCRPSKRRMQAVAN) the chain is on the cytoplasmic side. The helical transmembrane segment at 296 to 316 (VSIGAMFCMYGLTATFGYLTF) threads the bilayer. The Extracellular segment spans residues 317-334 (YSSVKAEMLHMYSQKDPL). Residues 335 to 355 (ILCVRLAVLLAVTLTVPVVLF) traverse the membrane as a helical segment. Residues 356 to 376 (PIRRALQQLLFPGKAFSWPRH) lie on the Cytoplasmic side of the membrane. A helical membrane pass occupies residues 377 to 397 (VAIALILLVLVNVLVICVPTI). At 398–399 (RD) the chain is on the extracellular side. The helical transmembrane segment at 400-420 (IFGVIGSTSAPSLIFILPSIF) threads the bilayer. The Cytoplasmic portion of the chain corresponds to 421 to 439 (YLRIVPSEVEPFLSWPKIQ). The helical transmembrane segment at 440-460 (ALCFGVLGVLFMAVSLGFMFA) threads the bilayer. The Extracellular segment spans residues 461–472 (NWATGQSRMSGH).

Belongs to the amino acid/polyamine transporter 2 family. In terms of tissue distribution, predominantly expressed in stomach, brain, liver, lung and intestinal tract.

The protein resides in the cell membrane. It catalyses the reaction L-serine(out) + Na(+)(out) + H(+)(in) = L-serine(in) + Na(+)(in) + H(+)(out). It carries out the reaction L-alanine(out) + Na(+)(out) + H(+)(in) = L-alanine(in) + Na(+)(in) + H(+)(out). The catalysed reaction is glycine(out) + Na(+)(out) + H(+)(in) = glycine(in) + Na(+)(in) + H(+)(out). The enzyme catalyses L-glutamine(out) + Na(+)(out) + H(+)(in) = L-glutamine(in) + Na(+)(in) + H(+)(out). It catalyses the reaction L-asparagine(out) + Na(+)(out) + H(+)(in) = L-asparagine(in) + Na(+)(in) + H(+)(out). It carries out the reaction L-histidine(out) + Na(+)(out) + H(+)(in) = L-histidine(in) + Na(+)(in) + H(+)(out). The catalysed reaction is L-cysteine(out) + Na(+)(out) + H(+)(in) = L-cysteine(in) + Na(+)(in) + H(+)(out). With respect to regulation, not inhibited by lithium. Partial allosteric regulation on ions sodium binding. Functionally, symporter that cotransports neutral amino acids and sodium ions, coupled to an H(+) antiporter activity. Releases L-glutamine and glycine from astroglial cells and may participate in the glutamate/GABA-L-glutamine cycle and the NMDA receptors activation. In addition, contributes significantly to L-glutamine uptake in retina, namely in ganglion and Mueller cells therefore, participates in the retinal glutamate-glutamine cycle. The transport activity is pH sensitive and Li(+) tolerant. Moreover functions in both direction and is associated with large uncoupled fluxes of protons. The transport is electroneutral coupled to the cotransport of 1 Na(+) and the antiport of 1 H(+). May have a particular importance for modulation of net hepatic glutamine flux. The polypeptide is Sodium-coupled neutral amino acid transporter 5 (SLC38A5) (Homo sapiens (Human)).